The sequence spans 238 residues: Ribonuclease PH (238 aa).

Phosphate is bound by residues R86 and 124 to 126; that span reads GTR.

The protein belongs to the RNase PH family. Homohexameric ring arranged as a trimer of dimers.

The enzyme catalyses tRNA(n+1) + phosphate = tRNA(n) + a ribonucleoside 5'-diphosphate. Phosphorolytic 3'-5' exoribonuclease that plays an important role in tRNA 3'-end maturation. Removes nucleotide residues following the 3'-CCA terminus of tRNAs; can also add nucleotides to the ends of RNA molecules by using nucleoside diphosphates as substrates, but this may not be physiologically important. Probably plays a role in initiation of 16S rRNA degradation (leading to ribosome degradation) during starvation. This chain is Ribonuclease PH, found in Trichlorobacter lovleyi (strain ATCC BAA-1151 / DSM 17278 / SZ) (Geobacter lovleyi).